The sequence spans 667 residues: Bifunctional polymyxin resistance protein ArnA (667 aa).

The formyltransferase ArnAFT stretch occupies residues 1–304 (MKAIVFAYHD…EMGIVTDVRL (304 aa)). The Proton donor; for formyltransferase activity role is filled by histidine 104. Residues arginine 114 and 136-140 (VKKAD) contribute to the (6R)-10-formyltetrahydrofolate site. Residues 314-667 (RRTRVLILGV…TAAPKDELNA (354 aa)) are dehydrogenase ArnADH. NAD(+) is bound by residues aspartate 347 and 368-369 (DI). Residues alanine 393, tyrosine 398, and 432 to 433 (TS) contribute to the UDP-alpha-D-glucuronate site. Glutamate 434 acts as the Proton acceptor; for decarboxylase activity in catalysis. UDP-alpha-D-glucuronate contacts are provided by residues arginine 460, asparagine 492, 526–535 (KLVDGGAQKR), and tyrosine 613. The active-site Proton donor; for decarboxylase activity is the arginine 619.

This sequence in the N-terminal section; belongs to the Fmt family. UDP-L-Ara4N formyltransferase subfamily. The protein in the C-terminal section; belongs to the NAD(P)-dependent epimerase/dehydratase family. UDP-glucuronic acid decarboxylase subfamily. In terms of assembly, homohexamer, formed by a dimer of trimers.

It carries out the reaction UDP-alpha-D-glucuronate + NAD(+) = UDP-beta-L-threo-pentopyranos-4-ulose + CO2 + NADH. The catalysed reaction is UDP-4-amino-4-deoxy-beta-L-arabinose + (6R)-10-formyltetrahydrofolate = UDP-4-deoxy-4-formamido-beta-L-arabinose + (6S)-5,6,7,8-tetrahydrofolate + H(+). Its pathway is nucleotide-sugar biosynthesis; UDP-4-deoxy-4-formamido-beta-L-arabinose biosynthesis; UDP-4-deoxy-4-formamido-beta-L-arabinose from UDP-alpha-D-glucuronate: step 1/3. The protein operates within nucleotide-sugar biosynthesis; UDP-4-deoxy-4-formamido-beta-L-arabinose biosynthesis; UDP-4-deoxy-4-formamido-beta-L-arabinose from UDP-alpha-D-glucuronate: step 3/3. It participates in bacterial outer membrane biogenesis; lipopolysaccharide biosynthesis. Bifunctional enzyme that catalyzes the oxidative decarboxylation of UDP-glucuronic acid (UDP-GlcUA) to UDP-4-keto-arabinose (UDP-Ara4O) and the addition of a formyl group to UDP-4-amino-4-deoxy-L-arabinose (UDP-L-Ara4N) to form UDP-L-4-formamido-arabinose (UDP-L-Ara4FN). The modified arabinose is attached to lipid A and is required for resistance to polymyxin and cationic antimicrobial peptides. The sequence is that of Bifunctional polymyxin resistance protein ArnA from Yersinia pestis bv. Antiqua (strain Antiqua).